The primary structure comprises 260 residues: 3'-5' ssDNA/RNA exonuclease TatD (260 aa).

Residues Glu-92, His-128, and His-153 each contribute to the a divalent metal cation site.

Belongs to the metallo-dependent hydrolases superfamily. TatD-type hydrolase family. TatD subfamily. In terms of assembly, monomer. Mg(2+) is required as a cofactor.

Its subcellular location is the cytoplasm. Its function is as follows. 3'-5' exonuclease that prefers single-stranded DNA and RNA. May play a role in the H(2)O(2)-induced DNA damage repair. This is 3'-5' ssDNA/RNA exonuclease TatD from Yersinia pseudotuberculosis serotype O:3 (strain YPIII).